The following is a 79-amino-acid chain: RNA-binding protein Hfq (79 aa).

Residues aspartate 10–valine 69 form the Sm domain.

Belongs to the Hfq family. Homohexamer.

Functionally, RNA chaperone that binds small regulatory RNA (sRNAs) and mRNAs to facilitate mRNA translational regulation in response to envelope stress, environmental stress and changes in metabolite concentrations. Also binds with high specificity to tRNAs. This chain is RNA-binding protein Hfq, found in Ralstonia nicotianae (strain ATCC BAA-1114 / GMI1000) (Ralstonia solanacearum).